We begin with the raw amino-acid sequence, 318 residues long: HPr kinase/phosphorylase (318 aa).

Active-site residues include H146 and K167. 161-168 contacts ATP; sequence GESGLGKS. Mg(2+) is bound at residue S168. D185 functions as the Proton acceptor; for phosphorylation activity. Proton donor; for dephosphorylation activity in the catalytic mechanism. Residues 209 to 218 are important for the catalytic mechanism of both phosphorylation and dephosphorylation; it reads LEVRGIGLLD. E210 contacts Mg(2+). Residue R252 is part of the active site. The tract at residues 273-278 is important for the catalytic mechanism of dephosphorylation; it reads QVVAGR.

The protein belongs to the HPrK/P family. Homohexamer. Requires Mg(2+) as cofactor.

The catalysed reaction is [HPr protein]-L-serine + ATP = [HPr protein]-O-phospho-L-serine + ADP + H(+). It carries out the reaction [HPr protein]-O-phospho-L-serine + phosphate + H(+) = [HPr protein]-L-serine + diphosphate. Catalyzes the ATP- as well as the pyrophosphate-dependent phosphorylation of a specific serine residue in HPr, a phosphocarrier protein of the phosphoenolpyruvate-dependent sugar phosphotransferase system (PTS). HprK/P also catalyzes the pyrophosphate-producing, inorganic phosphate-dependent dephosphorylation (phosphorolysis) of seryl-phosphorylated HPr (P-Ser-HPr). This chain is HPr kinase/phosphorylase, found in Acidovorax sp. (strain JS42).